Reading from the N-terminus, the 620-residue chain is Chaperone protein HscA homolog (620 aa).

It belongs to the heat shock protein 70 family.

Its function is as follows. Chaperone involved in the maturation of iron-sulfur cluster-containing proteins. Has a low intrinsic ATPase activity which is markedly stimulated by HscB. This chain is Chaperone protein HscA homolog, found in Shewanella woodyi (strain ATCC 51908 / MS32).